The sequence spans 36 residues: Dolichyl-diphosphooligosaccharide--protein glycosyltransferase subunit 2 (36 aa).

This sequence belongs to the SWP1 family. Component of the oligosaccharyltransferase (OST) complex.

Its subcellular location is the endoplasmic reticulum. The protein resides in the endoplasmic reticulum membrane. It functions in the pathway protein modification; protein glycosylation. In terms of biological role, subunit of the oligosaccharyl transferase (OST) complex that catalyzes the initial transfer of a defined glycan (Glc(3)Man(9)GlcNAc(2) in eukaryotes) from the lipid carrier dolichol-pyrophosphate to an asparagine residue within an Asn-X-Ser/Thr consensus motif in nascent polypeptide chains, the first step in protein N-glycosylation. N-glycosylation occurs cotranslationally and the complex associates with the Sec61 complex at the channel-forming translocon complex that mediates protein translocation across the endoplasmic reticulum (ER). All subunits are required for a maximal enzyme activity. The protein is Dolichyl-diphosphooligosaccharide--protein glycosyltransferase subunit 2 of Gallus gallus (Chicken).